Here is an 87-residue protein sequence, read N- to C-terminus: HssA/B-like protein 56 (87 aa).

The protein belongs to the hssA/B family.

In Dictyostelium discoideum (Social amoeba), this protein is HssA/B-like protein 56 (hssl56).